Here is a 336-residue protein sequence, read N- to C-terminus: Formimidoylglutamase (336 aa).

Positions 1–10 (MNPNFTTEHT) are enriched in polar residues. The segment at 1–22 (MNPNFTTEHTWQGRHDPEDGQA) is disordered. Residues 11-22 (WQGRHDPEDGQA) show a composition bias toward basic and acidic residues. Residues H127, D157, H159, D161, D254, and D256 each coordinate Mn(2+).

Belongs to the arginase family. Requires Mn(2+) as cofactor.

It carries out the reaction N-formimidoyl-L-glutamate + H2O = formamide + L-glutamate. Its pathway is amino-acid degradation; L-histidine degradation into L-glutamate; L-glutamate from N-formimidoyl-L-glutamate (hydrolase route): step 1/1. Catalyzes the conversion of N-formimidoyl-L-glutamate to L-glutamate and formamide. This Vibrio cholerae serotype O1 (strain ATCC 39541 / Classical Ogawa 395 / O395) protein is Formimidoylglutamase.